Reading from the N-terminus, the 112-residue chain is Reprimo-like protein (112 aa).

Residues 59-79 (VVQIAVLCVLSLTVLFGIFFL) traverse the membrane as a helical segment.

The protein belongs to the reprimo family.

The protein resides in the membrane. In Xenopus laevis (African clawed frog), this protein is Reprimo-like protein (rprml).